We begin with the raw amino-acid sequence, 253 residues long: Ubiquinone biosynthesis O-methyltransferase (253 aa).

S-adenosyl-L-methionine contacts are provided by Arg47, Gly78, Asp99, and Met141.

The protein belongs to the methyltransferase superfamily. UbiG/COQ3 family.

It catalyses the reaction a 3-demethylubiquinol + S-adenosyl-L-methionine = a ubiquinol + S-adenosyl-L-homocysteine + H(+). It carries out the reaction a 3-(all-trans-polyprenyl)benzene-1,2-diol + S-adenosyl-L-methionine = a 2-methoxy-6-(all-trans-polyprenyl)phenol + S-adenosyl-L-homocysteine + H(+). The protein operates within cofactor biosynthesis; ubiquinone biosynthesis. In terms of biological role, O-methyltransferase that catalyzes the 2 O-methylation steps in the ubiquinone biosynthetic pathway. The chain is Ubiquinone biosynthesis O-methyltransferase from Rhodopseudomonas palustris (strain ATCC BAA-98 / CGA009).